Here is a 716-residue protein sequence, read N- to C-terminus: ATP-dependent zinc metalloprotease FTSH 1, chloroplastic (716 aa).

A chloroplast-targeting transit peptide spans 1 to 48 (MASNSLLRSSSNFFLGSHIIISSPTPKTTRKPSFPFSFVSRAKYQITR). The N-terminal 38 residues, 49–86 (SSQDENSPNGKPNSPFSSQVALAAILLSSISSSPLALA), are a transit peptide targeting the thylakoid. Residues 204–224 (FTVIGNLIFPLLAFGGLFLLF) form a helical membrane-spanning segment. 302 to 309 (GPPGTGKT) is an ATP binding site. Histidine 524 serves as a coordination point for Zn(2+). Glutamate 525 is an active-site residue. 2 residues coordinate Zn(2+): histidine 528 and aspartate 605.

It in the N-terminal section; belongs to the AAA ATPase family. This sequence in the C-terminal section; belongs to the peptidase M41 family. As to quaternary structure, interacts with CHIP and HSP70. Heterohexamers with FTSH2, FTSH5 and FTSH8. Requires Zn(2+) as cofactor. The FTSH1 precursor is ubiquitinated by CHIP in the cytoplasm. In terms of tissue distribution, ubiquitous.

The protein localises to the plastid. It localises to the chloroplast thylakoid membrane. In terms of biological role, part of a complex that function as an ATP-dependent zinc metallopeptidase. Involved in the thylakoid formation and in the removal of damaged D1 in the photosystem II, preventing cell death under high-intensity light conditions. This chain is ATP-dependent zinc metalloprotease FTSH 1, chloroplastic (FTSH1), found in Arabidopsis thaliana (Mouse-ear cress).